The following is a 608-amino-acid chain: uncharacterized protein (608 aa).

A helical transmembrane segment spans residues 4 to 24 (LIFMALLMSLLFIGTVFGYGD).

To M.jannaschii MJ1394 and A.fulgidus AF2028.

It is found in the membrane. This is an uncharacterized protein from Methanocaldococcus jannaschii (strain ATCC 43067 / DSM 2661 / JAL-1 / JCM 10045 / NBRC 100440) (Methanococcus jannaschii).